The following is a 268-amino-acid chain: Tryptophan synthase alpha chain (268 aa).

Active-site proton acceptor residues include Glu49 and Asp60.

Belongs to the TrpA family. In terms of assembly, tetramer of two alpha and two beta chains.

The catalysed reaction is (1S,2R)-1-C-(indol-3-yl)glycerol 3-phosphate + L-serine = D-glyceraldehyde 3-phosphate + L-tryptophan + H2O. The protein operates within amino-acid biosynthesis; L-tryptophan biosynthesis; L-tryptophan from chorismate: step 5/5. Functionally, the alpha subunit is responsible for the aldol cleavage of indoleglycerol phosphate to indole and glyceraldehyde 3-phosphate. In Aeromonas hydrophila subsp. hydrophila (strain ATCC 7966 / DSM 30187 / BCRC 13018 / CCUG 14551 / JCM 1027 / KCTC 2358 / NCIMB 9240 / NCTC 8049), this protein is Tryptophan synthase alpha chain.